A 285-amino-acid polypeptide reads, in one-letter code: NAD kinase (285 aa).

The active-site Proton acceptor is the Asp-67. NAD(+) contacts are provided by residues 67–68 (DG), 141–142 (ND), Arg-152, Lys-169, Asp-171, 182–187 (TGYSLS), and Gln-242.

This sequence belongs to the NAD kinase family. A divalent metal cation is required as a cofactor.

Its subcellular location is the cytoplasm. It catalyses the reaction NAD(+) + ATP = ADP + NADP(+) + H(+). Functionally, involved in the regulation of the intracellular balance of NAD and NADP, and is a key enzyme in the biosynthesis of NADP. Catalyzes specifically the phosphorylation on 2'-hydroxyl of the adenosine moiety of NAD to yield NADP. This is NAD kinase from Trichlorobacter lovleyi (strain ATCC BAA-1151 / DSM 17278 / SZ) (Geobacter lovleyi).